We begin with the raw amino-acid sequence, 63 residues long: Small ribosomal subunit protein eS17 (63 aa).

The protein belongs to the eukaryotic ribosomal protein eS17 family.

The polypeptide is Small ribosomal subunit protein eS17 (Methanosphaerula palustris (strain ATCC BAA-1556 / DSM 19958 / E1-9c)).